A 741-amino-acid polypeptide reads, in one-letter code: Zinc finger and BTB domain-containing protein 20 (741 aa).

Residues methionine 1–glutamate 17 show a composition bias toward basic and acidic residues. The tract at residues methionine 1 to glycine 32 is disordered. The BTB domain maps to cysteine 104 to glutamine 167. A disordered region spans residues glycine 203–histidine 235. Positions aspartate 206–histidine 235 are enriched in polar residues. At threonine 211 the chain carries Phosphothreonine. Lysine 330 is covalently cross-linked (Glycyl lysine isopeptide (Lys-Gly) (interchain with G-Cter in SUMO1); alternate). Residue lysine 330 forms a Glycyl lysine isopeptide (Lys-Gly) (interchain with G-Cter in SUMO2); alternate linkage. The tract at residues arginine 350–glutamate 440 is disordered. At serine 353 the chain carries Phosphoserine. A compositionally biased stretch (acidic residues) spans glutamate 354–glutamate 367. Residue threonine 357 is modified to Phosphothreonine. Lysine 371 is covalently cross-linked (Glycyl lysine isopeptide (Lys-Gly) (interchain with G-Cter in SUMO2)). The span at alanine 404 to threonine 423 shows a compositional bias: low complexity. The span at asparagine 424–glutamate 434 shows a compositional bias: polar residues. C2H2-type zinc fingers lie at residues tyrosine 578–histidine 600, histidine 606–histidine 628, tyrosine 634–histidine 656, and tyrosine 662–histidine 684. Residues threonine 690 and threonine 695 each carry the phosphothreonine modification. The C2H2-type 5 zinc-finger motif lies at tyrosine 715–histidine 737. A Glycyl lysine isopeptide (Lys-Gly) (interchain with G-Cter in SUMO2) cross-link involves residue lysine 723.

In terms of assembly, can homodimerize. Binds to DNA. Sumoylated with SUMO1. As to expression, expressed in spleen, lymph node, thymus, peripheral blood leukocytes, and fetal liver.

The protein resides in the nucleus. Functionally, may be a transcription factor that may be involved in hematopoiesis, oncogenesis, and immune responses. Plays a role in postnatal myogenesis, may be involved in the regulation of satellite cells self-renewal. This is Zinc finger and BTB domain-containing protein 20 (ZBTB20) from Homo sapiens (Human).